Here is a 137-residue protein sequence, read N- to C-terminus: Fructose-bisphosphate aldolase C (137 aa).

The Schiff-base intermediate with dihydroxyacetone-P role is filled by K3.

It belongs to the class I fructose-bisphosphate aldolase family. In terms of assembly, homotetramer.

It carries out the reaction beta-D-fructose 1,6-bisphosphate = D-glyceraldehyde 3-phosphate + dihydroxyacetone phosphate. It participates in carbohydrate degradation; glycolysis; D-glyceraldehyde 3-phosphate and glycerone phosphate from D-glucose: step 4/4. This is Fructose-bisphosphate aldolase C (ALDOC) from Gallus gallus (Chicken).